Consider the following 147-residue polypeptide: Lysozyme C-1 (147 aa).

Positions 1 to 18 (MKALIILGFLFLSVAVQG) are cleaved as a signal peptide. Positions 19–147 (KVFERCELAR…VSSYVEGCTL (129 aa)) constitute a C-type lysozyme domain. 4 disulfides stabilise this stretch: cysteine 24/cysteine 145, cysteine 48/cysteine 133, cysteine 83/cysteine 99, and cysteine 95/cysteine 113. Residues glutamate 53 and aspartate 71 contribute to the active site.

The protein belongs to the glycosyl hydrolase 22 family. In terms of assembly, monomer. In terms of tissue distribution, stomach-specific.

The catalysed reaction is Hydrolysis of (1-&gt;4)-beta-linkages between N-acetylmuramic acid and N-acetyl-D-glucosamine residues in a peptidoglycan and between N-acetyl-D-glucosamine residues in chitodextrins.. In terms of biological role, lysozymes have primarily a bacteriolytic function; those in tissues and body fluids are associated with the monocyte-macrophage system and enhance the activity of immunoagents. In Bos taurus (Bovine), this protein is Lysozyme C-1 (LYZ1).